The primary structure comprises 489 residues: Acetylcholine receptor subunit beta (489 aa).

Positions 1 to 20 (NSGALLWPLIWGLLLIGTQA) are cleaved as a signal peptide. The Extracellular portion of the chain corresponds to 21–235 (LDKEAQLRDK…ITFYLVIQRK (215 aa)). N-linked (GlcNAc...) asparagine glycans are attached at residues Asn-135 and Asn-161. Cys-148 and Cys-162 are joined by a disulfide. Transmembrane regions (helical) follow at residues 236–260 (PLFY…VFYL), 268–286 (MTLS…LLLA), and 302–323 (YLIF…VLNL). At 324–457 (HHRSPNTHHM…WQYVAMVVDR (134 aa)) the chain is on the cytoplasmic side. Residues 458–476 (LFLWTFIAFTSLGTLSIFL) traverse the membrane as a helical segment.

The protein belongs to the ligand-gated ion channel (TC 1.A.9) family. Acetylcholine receptor (TC 1.A.9.1) subfamily. Beta-1/CHRNB1 sub-subfamily. In terms of assembly, pentamer of two alpha chains, and one each of the beta, delta, and gamma (in immature muscle) or epsilon (in mature muscle) chains.

Its subcellular location is the postsynaptic cell membrane. It localises to the cell membrane. It catalyses the reaction K(+)(in) = K(+)(out). The catalysed reaction is Na(+)(in) = Na(+)(out). Its function is as follows. After binding acetylcholine, the AChR responds by an extensive change in conformation that affects all subunits and leads to opening of an ion-conducting channel across the plasma membrane. The chain is Acetylcholine receptor subunit beta (chrnb1) from Xenopus laevis (African clawed frog).